The following is a 228-amino-acid chain: Cytidylate kinase (228 aa).

Residue 17-25 (GPTASGKGT) coordinates ATP.

The protein belongs to the cytidylate kinase family. Type 1 subfamily.

The protein localises to the cytoplasm. The enzyme catalyses CMP + ATP = CDP + ADP. The catalysed reaction is dCMP + ATP = dCDP + ADP. The protein is Cytidylate kinase of Paraburkholderia phymatum (strain DSM 17167 / CIP 108236 / LMG 21445 / STM815) (Burkholderia phymatum).